We begin with the raw amino-acid sequence, 574 residues long: Methionine--tRNA ligase (574 aa).

A 'HIGH' region motif is present at residues 11–21 (PYINGIKHLGN). Zn(2+) is bound by residues C143, C146, C156, and C159. The 'KMSKS' region signature appears at 345 to 349 (KFSTS). ATP is bound at residue T348.

This sequence belongs to the class-I aminoacyl-tRNA synthetase family. MetG type 1 subfamily. In terms of assembly, monomer. Zn(2+) is required as a cofactor.

It localises to the cytoplasm. The enzyme catalyses tRNA(Met) + L-methionine + ATP = L-methionyl-tRNA(Met) + AMP + diphosphate. Is required not only for elongation of protein synthesis but also for the initiation of all mRNA translation through initiator tRNA(fMet) aminoacylation. In Streptomyces avermitilis (strain ATCC 31267 / DSM 46492 / JCM 5070 / NBRC 14893 / NCIMB 12804 / NRRL 8165 / MA-4680), this protein is Methionine--tRNA ligase.